Consider the following 309-residue polypeptide: Sulfate adenylyltransferase subunit 2 (309 aa).

The protein belongs to the PAPS reductase family. CysD subfamily. Heterodimer composed of CysD, the smaller subunit, and CysN.

It carries out the reaction sulfate + ATP + H(+) = adenosine 5'-phosphosulfate + diphosphate. The protein operates within sulfur metabolism; hydrogen sulfide biosynthesis; sulfite from sulfate: step 1/3. Its function is as follows. With CysN forms the ATP sulfurylase (ATPS) that catalyzes the adenylation of sulfate producing adenosine 5'-phosphosulfate (APS) and diphosphate, the first enzymatic step in sulfur assimilation pathway. APS synthesis involves the formation of a high-energy phosphoric-sulfuric acid anhydride bond driven by GTP hydrolysis by CysN coupled to ATP hydrolysis by CysD. The protein is Sulfate adenylyltransferase subunit 2 of Mycobacterium sp. (strain KMS).